A 138-amino-acid polypeptide reads, in one-letter code: U1 small nuclear ribonucleoprotein C (138 aa).

The Matrin-type zinc-finger motif lies at 4–36 (FYCDYCDTYLTHDSPSVRKTHCSGRKHKENVRD). Tyrosine 8 carries the post-translational modification Phosphotyrosine. The residue at position 17 (serine 17) is a Phosphoserine. Lysine 52 carries the N6-acetyllysine modification. The segment at 62–99 (IPPNLFSAPPLGGPMIPPPHPSMMGPPPPGMMPVGPPP) is disordered. The segment covering 72–99 (LGGPMIPPPHPSMMGPPPPGMMPVGPPP) has biased composition (pro residues).

The protein belongs to the U1 small nuclear ribonucleoprotein C family. As to quaternary structure, component of the U1 snRNP. The U1 snRNP is composed of the U1 snRNA and the 7 core Sm proteins SNRPB, SNRPD1, SNRPD2, SNRPD3, SNRPE, SNRPF and SNRPG that assemble in a heptameric protein ring on the Sm site of the small nuclear RNA to form the core snRNP, and at least 3 U1 snRNP-specific proteins SNRNP70/U1-70K, SNRPA/U1-A and SNRPC/U1-C. SNRPC/U1-C interacts with U1 snRNA and the 5' splice-site region of the pre-mRNA. Interacts (via N-terminus) with TIA1 (via C-terminus); thereby promoting spliceosomal U1 snRNP recruitment to 5' splice sites.

The protein localises to the nucleus. Functionally, component of the spliceosomal U1 snRNP, which is essential for recognition of the pre-mRNA 5' splice-site and the subsequent assembly of the spliceosome. SNRPC/U1-C is directly involved in initial 5' splice-site recognition for both constitutive and regulated alternative splicing. The interaction with the 5' splice-site seems to precede base-pairing between the pre-mRNA and the U1 snRNA. Stimulates commitment or early (E) complex formation by stabilizing the base pairing of the 5' end of the U1 snRNA and the 5' splice-site region. The sequence is that of U1 small nuclear ribonucleoprotein C from Monodelphis domestica (Gray short-tailed opossum).